Reading from the N-terminus, the 330-residue chain is Carbonic anhydrase (330 aa).

Residues 1 to 109 (MSTASAFATN…AAARIDQITA (109 aa)) form a chloroplast transit peptide-like region.

Belongs to the beta-class carbonic anhydrase family.

The protein localises to the cytoplasm. The enzyme catalyses hydrogencarbonate + H(+) = CO2 + H2O. Functionally, reversible hydration of carbon dioxide. The sequence is that of Carbonic anhydrase from Flaveria brownii (Brown's yellowtops).